Reading from the N-terminus, the 105-residue chain is Nitrogen fixation nifHD region glnB-like protein 1 (105 aa).

It belongs to the P(II) protein family.

Could be involved in the regulation of nitrogen fixation. This chain is Nitrogen fixation nifHD region glnB-like protein 1 (glnBI), found in Methanococcus maripaludis (strain DSM 14266 / JCM 13030 / NBRC 101832 / S2 / LL).